The following is a 192-amino-acid chain: Phosphoheptose isomerase (192 aa).

The 156-residue stretch at L37–K192 folds into the SIS domain. N52–G54 contributes to the substrate binding site. The Zn(2+) site is built by H61 and E65. Substrate-binding positions include E65, N93–D94, S119–S121, S124, and Q172. Positions 172 and 180 each coordinate Zn(2+).

Belongs to the SIS family. GmhA subfamily. Homotetramer. Zn(2+) serves as cofactor.

The protein localises to the cytoplasm. The enzyme catalyses 2 D-sedoheptulose 7-phosphate = D-glycero-alpha-D-manno-heptose 7-phosphate + D-glycero-beta-D-manno-heptose 7-phosphate. The protein operates within carbohydrate biosynthesis; D-glycero-D-manno-heptose 7-phosphate biosynthesis; D-glycero-alpha-D-manno-heptose 7-phosphate and D-glycero-beta-D-manno-heptose 7-phosphate from sedoheptulose 7-phosphate: step 1/1. Catalyzes the isomerization of sedoheptulose 7-phosphate in D-glycero-D-manno-heptose 7-phosphate. The sequence is that of Phosphoheptose isomerase from Escherichia fergusonii (strain ATCC 35469 / DSM 13698 / CCUG 18766 / IAM 14443 / JCM 21226 / LMG 7866 / NBRC 102419 / NCTC 12128 / CDC 0568-73).